A 539-amino-acid chain; its full sequence is MSKNNFRDDFEKNRQSINSDDQFEDNTNEFDENSNESNDFDNQSDQQFPPRNAQRRQRRRNQATNKNRKFGNQNSDSNANGSLDDRHDEDSFNELQHNQQENHLDNEPIHKDDKLSSEKDFNNDASRRNNRHEASNRKHDKDYDNGSLNDDDRHRRNHEEGIDERQDNRNHKDQQNKKSRHGKDAAIAGGAGVAGAAGAKAAKDKRKKDEHHDSKYNEHKDDRDLNNDNQFDQNRKHDKDLHDDHRDAKDNHSKEEPKKGNKGKKAAVGAGAAGAAGAAGVAAAKHKKDHKNNNHKDNHSHNRDHQDDHRNHKHEDGNDGFQAHNGKKKRGLAGILLPLIALLLILAALAIFIGMYLNNDKKDSNQADNKTEQTANKDNNKDSKDKASNDSDKDKASSDKDKDKATNDDDSNDKATTDNDSSNNSSDDNSSSSDNSTSSNSSDNSSSSDNNGNNSNSDNNNGNSQATSNNSSQSNSNNNQSNSSNSGQQTHVVSGNENLYRIAIQYYGEGTVENVNKLKQANGLSSNNISNGQKLIIPQ.

Positions 1 to 14 (MSKNNFRDDFEKNR) are enriched in basic and acidic residues. Residues 1-324 (MSKNNFRDDF…EDGNDGFQAH (324 aa)) are disordered. Positions 21–34 (DQFEDNTNEFDENS) are enriched in acidic residues. Residues 35 to 52 (NESNDFDNQSDQQFPPRN) are compositionally biased toward low complexity. The segment covering 53-69 (AQRRQRRRNQATNKNRK) has biased composition (basic residues). Residues 70-81 (FGNQNSDSNANG) show a composition bias toward polar residues. 3 stretches are compositionally biased toward basic and acidic residues: residues 100–176 (QENH…DQQN), 210–226 (EHHD…RDLN), and 233–259 (QNRK…EPKK). Residues 266–283 (AAVGAGAAGAAGAAGVAA) are compositionally biased toward low complexity. A compositionally biased stretch (basic and acidic residues) spans 291–317 (KNNNHKDNHSHNRDHQDDHRNHKHEDG). The helical transmembrane segment at 335-355 (ILLPLIALLLILAALAIFIGM) threads the bilayer. 2 stretches are compositionally biased toward basic and acidic residues: residues 362–371 (KDSNQADNKT) and 378–417 (DNNK…KATT). The segment at 362–491 (KDSNQADNKT…NSSNSGQQTH (130 aa)) is disordered. The segment covering 418 to 490 (DNDSSNNSSD…SNSSNSGQQT (73 aa)) has biased composition (low complexity). One can recognise a LysM domain in the interval 489–537 (QTHVVSGNENLYRIAIQYYGEGTVENVNKLKQANGLSSNNISNGQKLII).

It is found in the cell membrane. This Staphylococcus haemolyticus (strain JCSC1435) protein is Probable elastin-binding protein EbpS (ebpS).